Reading from the N-terminus, the 114-residue chain is Histone H2B (114 aa).

A disordered region spans residues 1 to 22; that stretch reads MAKTPSKKAAKAPKKAGSKRNK. The residue at position 3 (K3) is an N6-acetyllysine. K110 participates in a covalent cross-link: Glycyl lysine isopeptide (Lys-Gly) (interchain with G-Cter in ubiquitin).

It belongs to the histone H2B family. The nucleosome is a histone octamer containing two molecules each of H2A, H2B, H3 and H4 assembled in one H3-H4 heterotetramer and two H2A-H2B heterodimers. The octamer wraps approximately 147 bp of DNA. In terms of processing, monoubiquitination of Lys-110 gives a specific tag for epigenetic transcriptional activation and is also prerequisite for histone H3 'Lys-4' and 'Lys-79' methylation.

It is found in the nucleus. Its subcellular location is the chromosome. In terms of biological role, core component of nucleosome. Nucleosomes wrap and compact DNA into chromatin, limiting DNA accessibility to the cellular machineries which require DNA as a template. Histones thereby play a central role in transcription regulation, DNA repair, DNA replication and chromosomal stability. DNA accessibility is regulated via a complex set of post-translational modifications of histones, also called histone code, and nucleosome remodeling. The chain is Histone H2B from Olisthodiscus luteus (Marine phytoflagellate).